Here is a 366-residue protein sequence, read N- to C-terminus: Aminomethyltransferase (366 aa).

This sequence belongs to the GcvT family. As to quaternary structure, the glycine cleavage system is composed of four proteins: P, T, L and H.

The catalysed reaction is N(6)-[(R)-S(8)-aminomethyldihydrolipoyl]-L-lysyl-[protein] + (6S)-5,6,7,8-tetrahydrofolate = N(6)-[(R)-dihydrolipoyl]-L-lysyl-[protein] + (6R)-5,10-methylene-5,6,7,8-tetrahydrofolate + NH4(+). Functionally, the glycine cleavage system catalyzes the degradation of glycine. The chain is Aminomethyltransferase from Thermosynechococcus vestitus (strain NIES-2133 / IAM M-273 / BP-1).